The primary structure comprises 44 residues: Large ribosomal subunit protein bL34 (44 aa).

Belongs to the bacterial ribosomal protein bL34 family.

This Ehrlichia ruminantium (strain Gardel) protein is Large ribosomal subunit protein bL34.